Consider the following 345-residue polypeptide: Acetylserotonin O-methyltransferase (345 aa).

Residues Y147, W164, D210, 235-237 (GDF), and R252 each bind S-adenosyl-L-methionine. H255 (proton donor/acceptor) is an active-site residue. Residues D256, N302, and Q306 each contribute to the substrate site.

Belongs to the class I-like SAM-binding methyltransferase superfamily. Cation-independent O-methyltransferase family. As to quaternary structure, homodimer. In terms of tissue distribution, expressed in the pineal gland (at protein level). Not detectable in retina, nor in liver.

It carries out the reaction N-acetylserotonin + S-adenosyl-L-methionine = melatonin + S-adenosyl-L-homocysteine + H(+). It functions in the pathway aromatic compound metabolism; melatonin biosynthesis; melatonin from serotonin: step 1/2. Its function is as follows. Catalyzes the transfer of a methyl group onto N-acetylserotonin, producing melatonin (N-acetyl-5-methoxytryptamine). This is Acetylserotonin O-methyltransferase (ASMT) from Bos taurus (Bovine).